The chain runs to 88 residues: Exodeoxyribonuclease 7 small subunit (88 aa).

The protein belongs to the XseB family. In terms of assembly, heterooligomer composed of large and small subunits.

It is found in the cytoplasm. It catalyses the reaction Exonucleolytic cleavage in either 5'- to 3'- or 3'- to 5'-direction to yield nucleoside 5'-phosphates.. Its function is as follows. Bidirectionally degrades single-stranded DNA into large acid-insoluble oligonucleotides, which are then degraded further into small acid-soluble oligonucleotides. The protein is Exodeoxyribonuclease 7 small subunit of Bordetella petrii (strain ATCC BAA-461 / DSM 12804 / CCUG 43448).